Here is a 255-residue protein sequence, read N- to C-terminus: Cytochrome c oxidase subunit 3 (255 aa).

7 consecutive transmembrane segments (helical) span residues 12-29, 57-77, 91-111, 126-146, 155-175, 196-216, and 235-255; these read INII…STGL, LKYL…INGI, IFGM…WGFF, LEAF…ISLI, YFEV…FLSF, FNVL…FALM, and GMYW…LFLL.

The protein belongs to the cytochrome c oxidase subunit 3 family. As to quaternary structure, component of the cytochrome c oxidase (complex IV, CIV), a multisubunit enzyme composed of a catalytic core of 3 subunits and several supernumerary subunits. The complex exists as a monomer or a dimer and forms supercomplexes (SCs) in the inner mitochondrial membrane with ubiquinol-cytochrome c oxidoreductase (cytochrome b-c1 complex, complex III, CIII).

Its subcellular location is the mitochondrion inner membrane. The catalysed reaction is 4 Fe(II)-[cytochrome c] + O2 + 8 H(+)(in) = 4 Fe(III)-[cytochrome c] + 2 H2O + 4 H(+)(out). Functionally, component of the cytochrome c oxidase, the last enzyme in the mitochondrial electron transport chain which drives oxidative phosphorylation. The respiratory chain contains 3 multisubunit complexes succinate dehydrogenase (complex II, CII), ubiquinol-cytochrome c oxidoreductase (cytochrome b-c1 complex, complex III, CIII) and cytochrome c oxidase (complex IV, CIV), that cooperate to transfer electrons derived from NADH and succinate to molecular oxygen, creating an electrochemical gradient over the inner membrane that drives transmembrane transport and the ATP synthase. Cytochrome c oxidase is the component of the respiratory chain that catalyzes the reduction of oxygen to water. Electrons originating from reduced cytochrome c in the intermembrane space (IMS) are transferred via the dinuclear copper A center (CU(A)) of subunit 2 and heme A of subunit 1 to the active site in subunit 1, a binuclear center (BNC) formed by heme A3 and copper B (CU(B)). The BNC reduces molecular oxygen to 2 water molecules using 4 electrons from cytochrome c in the IMS and 4 protons from the mitochondrial matrix. In Theileria annulata, this protein is Cytochrome c oxidase subunit 3 (MT-CO3).